Consider the following 382-residue polypeptide: Ribosomal RNA large subunit methyltransferase G (382 aa).

Belongs to the methyltransferase superfamily. RlmG family.

The protein localises to the cytoplasm. The catalysed reaction is guanosine(1835) in 23S rRNA + S-adenosyl-L-methionine = N(2)-methylguanosine(1835) in 23S rRNA + S-adenosyl-L-homocysteine + H(+). In terms of biological role, specifically methylates the guanine in position 1835 (m2G1835) of 23S rRNA. The chain is Ribosomal RNA large subunit methyltransferase G from Aliivibrio salmonicida (strain LFI1238) (Vibrio salmonicida (strain LFI1238)).